The following is a 743-amino-acid chain: 1,4-alpha-glucan branching enzyme GlgB 2 (743 aa).

Residues 1 to 23 (MSERQGGQEQRTEADGMTTEGIS) are disordered. The Nucleophile role is filled by D422. Catalysis depends on E475, which acts as the Proton donor.

The protein belongs to the glycosyl hydrolase 13 family. GlgB subfamily. As to quaternary structure, monomer.

The catalysed reaction is Transfers a segment of a (1-&gt;4)-alpha-D-glucan chain to a primary hydroxy group in a similar glucan chain.. It participates in glycan biosynthesis; glycogen biosynthesis. Its function is as follows. Catalyzes the formation of the alpha-1,6-glucosidic linkages in glycogen by scission of a 1,4-alpha-linked oligosaccharide from growing alpha-1,4-glucan chains and the subsequent attachment of the oligosaccharide to the alpha-1,6 position. This Xanthomonas euvesicatoria pv. vesicatoria (strain 85-10) (Xanthomonas campestris pv. vesicatoria) protein is 1,4-alpha-glucan branching enzyme GlgB 2.